We begin with the raw amino-acid sequence, 505 residues long: MARRSSRVSWLAFEGWESRDLPRVSPRLFGAWHPAPAAARMPTRWAPGTQCMTKCENSRPKPGELAFRKGDMVTILEACEDKSWYRAKHHGSGQEGLLAAAALRHGEALSTDPKLSLMPWFHGKISGQEAIQQLQPPEDGLFLVRESARHPGDYVLCVSFGRDVIHYRVLHRDGHLTIDEAVCFCNLMDMVEHYTKDKGAICTKLVKPRRKQGAKSAEEELAKAGWLLDLQHLTLGAQIGEGEFGAVLQGEYLGQKVAVKNIKCDVTAQAFLDETAVMTKLQHRNLVRLLGVILHHGLYIVMEHVSKGNLVNFLRTRGRALVSTSQLLQFALHVAEGMEYLESKKLVHRDLAARNILVSEDLVAKVSDFGLAKAERKGLDSSRLPVKWTAPEALKNGRFSSKSDVWSFGVLLWEVFSYGRAPYPKMSLKEVSEAVEKGYRMEPPDGCPGSVHTLMGSCWEAEPARRPPFRKIVEKLGRELRSVGVSAPAGGQEAEGSAPTRSQDP.

Positions alanine 46–alanine 108 constitute an SH3 domain. The 90-residue stretch at tryptophan 120–arginine 209 folds into the SH2 domain. The region spanning leucine 233–arginine 481 is the Protein kinase domain. Residues isoleucine 239 to valine 247 and lysine 260 each bind ATP. The active-site Proton acceptor is aspartate 350. Positions valine 483–proline 505 are disordered.

Belongs to the protein kinase superfamily. Tyr protein kinase family. CSK subfamily. Interacts with KIT. As to expression, most abundant in brain, and to a lesser extent in the spleen, the thymus and the liver. Also found in the T-cell lineage.

It localises to the cytoplasm. Its subcellular location is the membrane. It carries out the reaction L-tyrosyl-[protein] + ATP = O-phospho-L-tyrosyl-[protein] + ADP + H(+). Its function is as follows. Could play a significant role in the signal transduction of hematopoietic cells. May regulate tyrosine kinase activity of SRC-family members in brain by specifically phosphorylating their C-terminal regulatory tyrosine residue which acts as a negative regulatory site. It may play an inhibitory role in the control of T-cell proliferation. The chain is Megakaryocyte-associated tyrosine-protein kinase (Matk) from Mus musculus (Mouse).